Consider the following 571-residue polypeptide: Septation ring formation regulator EzrA (571 aa).

Residues 1–3 (MYY) lie on the Extracellular side of the membrane. Residues 4–22 (MLIGFIIVVIAIISAGYIL) form a helical membrane-spanning segment. The Cytoplasmic segment spans residues 23 to 571 (KRKHYQRINE…ESKVSVDDIE (549 aa)). 5 coiled-coil regions span residues 169–214 (VETK…AQME), 249–298 (AQME…DTLE), 326–374 (DALA…ASGE), 400–438 (KFAE…RERL), and 474–529 (TQDW…ENHF).

Belongs to the EzrA family.

The protein resides in the cell membrane. Negative regulator of FtsZ ring formation; modulates the frequency and position of FtsZ ring formation. Inhibits FtsZ ring formation at polar sites. Interacts either with FtsZ or with one of its binding partners to promote depolymerization. This is Septation ring formation regulator EzrA from Listeria welshimeri serovar 6b (strain ATCC 35897 / DSM 20650 / CCUG 15529 / CIP 8149 / NCTC 11857 / SLCC 5334 / V8).